Reading from the N-terminus, the 310-residue chain is Putative S-adenosyl-L-methionine-dependent methyltransferase MSMEG_1888/MSMEI_1848 (310 aa).

S-adenosyl-L-methionine contacts are provided by residues Asp-128 and 157-158; that span reads DL.

It belongs to the UPF0677 family.

Functionally, exhibits S-adenosyl-L-methionine-dependent methyltransferase activity. The polypeptide is Putative S-adenosyl-L-methionine-dependent methyltransferase MSMEG_1888/MSMEI_1848 (Mycolicibacterium smegmatis (strain ATCC 700084 / mc(2)155) (Mycobacterium smegmatis)).